The chain runs to 430 residues: Adenylosuccinate synthetase (430 aa).

Residues 12–18 and 40–42 contribute to the GTP site; these read GDEGKGK and GHT. Asp-13 (proton acceptor) is an active-site residue. Residues Asp-13 and Gly-40 each contribute to the Mg(2+) site. Residues 13–16, 38–41, Thr-128, Arg-142, Gln-223, Thr-238, and Arg-302 each bind IMP; these read DEGK and NAGH. Catalysis depends on His-41, which acts as the Proton donor. GTP-binding positions include 330–332 and 412–414; these read SID and SVG.

It belongs to the adenylosuccinate synthetase family. As to quaternary structure, homodimer. The cofactor is Mg(2+).

The protein resides in the cytoplasm. The enzyme catalyses IMP + L-aspartate + GTP = N(6)-(1,2-dicarboxyethyl)-AMP + GDP + phosphate + 2 H(+). The protein operates within purine metabolism; AMP biosynthesis via de novo pathway; AMP from IMP: step 1/2. Plays an important role in the de novo pathway of purine nucleotide biosynthesis. Catalyzes the first committed step in the biosynthesis of AMP from IMP. The chain is Adenylosuccinate synthetase from Bacillus subtilis (strain 168).